We begin with the raw amino-acid sequence, 396 residues long: tRNA (guanine(9)-N1)-methyltransferase (396 aa).

Composition is skewed to basic and acidic residues over residues 1 to 18 (MEDD…HDEV) and 52 to 73 (DRID…HGKD). Residues 1–109 (MEDDDRPRKY…KVKRKEKLVA (109 aa)) form a disordered region. The SAM-dependent MTase TRM10-type domain occupies 139–357 (TQKKFQRSTL…QVIPQRKGGK (219 aa)). S-adenosyl-L-methionine-binding positions include 264-265 (LS), Gly284, 288-292 (DKNRH), Cys296, Leu310, and 322-324 (QVL). Catalysis depends on Asp288, which acts as the Proton acceptor. Residues 354 to 396 (KGGKLKSADHESEDQTPRESVEAVEAEPDGEGAAAEAGEGGKE) are disordered. Positions 359-374 (KSADHESEDQTPRESV) are enriched in basic and acidic residues.

This sequence belongs to the class IV-like SAM-binding methyltransferase superfamily. TRM10 family. Monomer.

The protein localises to the cytoplasm. It is found in the nucleus. It catalyses the reaction guanosine(9) in tRNA + S-adenosyl-L-methionine = N(1)-methylguanosine(9) in tRNA + S-adenosyl-L-homocysteine + H(+). S-adenosyl-L-methionine-dependent guanine N(1)-methyltransferase that catalyzes the formation of N(1)-methylguanine at position 9 (m1G9) in cytoplasmic tRNA. The chain is tRNA (guanine(9)-N1)-methyltransferase from Aspergillus fumigatus (strain ATCC MYA-4609 / CBS 101355 / FGSC A1100 / Af293) (Neosartorya fumigata).